Consider the following 351-residue polypeptide: Blue-sensitive opsin (351 aa).

The Extracellular portion of the chain corresponds to 1–40; that stretch reads MKQVPEFHEDFYIPIPLDINNLSAYSPFLVPQDHLGNQGI. An N-linked (GlcNAc...) asparagine glycan is attached at Asn-21. Residues 41–65 form a helical membrane-spanning segment; sequence FMAMSVFMFFIFIGGASINILTILC. At 66 to 77 the chain is on the cytoplasmic side; it reads TIQFKKLRSHLN. The chain crosses the membrane as a helical span at residues 78–103; that stretch reads YILVNLSIANLFVAIFGSPLSFYSFF. Residues 104–117 lie on the Extracellular side of the membrane; sequence NRYFIFGATACKIE. A disulfide bridge connects residues Cys-114 and Cys-191. The helical transmembrane segment at 118 to 137 threads the bilayer; the sequence is GFLATLGGMVGLWSLAVVAF. The Cytoplasmic portion of the chain corresponds to 138 to 156; it reads ERWLVICKPLGNFTFKTPH. Residues 157 to 180 form a helical membrane-spanning segment; that stretch reads AIAGCILPWISALAASLPPLFGWS. The Extracellular segment spans residues 181–206; it reads RYIPEGLQCSCGPDWYTTNNKYNNES. A helical membrane pass occupies residues 207–234; that stretch reads YVMFLFCFCFAVPFGTIVFCYGQLLITL. The Cytoplasmic portion of the chain corresponds to 235-256; it reads KLAAKAQADSASTQKAEREVTK. A helical transmembrane segment spans residues 257–280; sequence MVVVMVLGFLVCWAPYASFSLWIV. The Extracellular portion of the chain corresponds to 281-288; the sequence is SHRGEEFD. A helical membrane pass occupies residues 289 to 313; the sequence is LRMATIPSCLSKASTVYNPVIYVLM. Lys-300 is modified (N6-(retinylidene)lysine). The Cytoplasmic segment spans residues 314–351; it reads NKQFRSCMMKMVCGKNIEEDEASTSSQVTQVSSVAPEK.

The protein belongs to the G-protein coupled receptor 1 family. Opsin subfamily. Post-translationally, phosphorylated on some or all of the serine and threonine residues present in the C-terminal region. As to expression, the color pigments are found in the cone photoreceptor cells.

It is found in the membrane. Functionally, visual pigments are the light-absorbing molecules that mediate vision. They consist of an apoprotein, opsin, covalently linked to cis-retinal. This Carassius auratus (Goldfish) protein is Blue-sensitive opsin.